A 594-amino-acid polypeptide reads, in one-letter code: Lysine--tRNA ligase cla4 (594 aa).

A disordered region spans residues M1–A62. Positions T18 to K42 are enriched in basic and acidic residues.

Belongs to the class-II aminoacyl-tRNA synthetase family. As to quaternary structure, homodimer.

It catalyses the reaction tRNA(Lys) + L-lysine + ATP = L-lysyl-tRNA(Lys) + AMP + diphosphate. Involved in self-resistance to cladosporin since this product is an inhibitor of lysyl-tRNA synthetase. Cla4 may not be inhibited by cladosporin, thereby imparting cladosporin resistance. When cladosporin biosynthesis is switched on, transcription of cla4 will then be necessary for continued protein synthesis in C.cladosporioides. The chain is Lysine--tRNA ligase cla4 from Cladosporium cladosporioides.